The primary structure comprises 141 residues: Large ribosomal subunit protein uL11 (141 aa).

It belongs to the universal ribosomal protein uL11 family. In terms of assembly, part of the ribosomal stalk of the 50S ribosomal subunit. Interacts with L10 and the large rRNA to form the base of the stalk. L10 forms an elongated spine to which L12 dimers bind in a sequential fashion forming a multimeric L10(L12)X complex.

Forms part of the ribosomal stalk which helps the ribosome interact with GTP-bound translation factors. This chain is Large ribosomal subunit protein uL11, found in Acidianus ambivalens (Desulfurolobus ambivalens).